A 158-amino-acid chain; its full sequence is Ribosome maturation factor RimP (158 aa).

This sequence belongs to the RimP family.

It localises to the cytoplasm. In terms of biological role, required for maturation of 30S ribosomal subunits. In Lactiplantibacillus plantarum (strain ATCC BAA-793 / NCIMB 8826 / WCFS1) (Lactobacillus plantarum), this protein is Ribosome maturation factor RimP.